Consider the following 231-residue polypeptide: E3 ubiquitin-protein ligase At3g02290 (231 aa).

The segment covering 103-118 (GSSHSHEEVEPLRSDS) has biased composition (basic and acidic residues). The disordered stretch occupies residues 103–125 (GSSHSHEEVEPLRSDSDADSESF). Residues 181 to 222 (CPTCLEEYTSENPKIVTKCSHHFHLSCIYEWMERSENCPVCG) form an RING-type; atypical zinc finger.

It is found in the cytoplasm. It carries out the reaction S-ubiquitinyl-[E2 ubiquitin-conjugating enzyme]-L-cysteine + [acceptor protein]-L-lysine = [E2 ubiquitin-conjugating enzyme]-L-cysteine + N(6)-ubiquitinyl-[acceptor protein]-L-lysine.. The protein operates within protein modification; protein ubiquitination. Functionally, mediates E2-dependent protein ubiquitination. In Arabidopsis thaliana (Mouse-ear cress), this protein is E3 ubiquitin-protein ligase At3g02290.